Reading from the N-terminus, the 320-residue chain is N-acetylneuraminate lyase (320 aa).

Positions 51 and 52 each coordinate aceneuramate. Residue Tyr143 is the Proton donor of the active site. Lys173 functions as the Schiff-base intermediate with substrate in the catalytic mechanism. Positions 175, 199, 201, 202, and 218 each coordinate aceneuramate. Ser308 carries the post-translational modification Phosphoserine.

It belongs to the DapA family. NanA subfamily. Homotetramer.

It is found in the cytoplasm. The catalysed reaction is aceneuramate = aldehydo-N-acetyl-D-mannosamine + pyruvate. Its pathway is amino-sugar metabolism; N-acetylneuraminate degradation. Catalyzes the cleavage of N-acetylneuraminic acid (sialic acid) to form pyruvate and N-acetylmannosamine via a Schiff base intermediate. It prevents sialic acids from being recycled and returning to the cell surface. Involved in the N-glycolylneuraminic acid (Neu5Gc) degradation pathway. The polypeptide is N-acetylneuraminate lyase (Mus musculus (Mouse)).